We begin with the raw amino-acid sequence, 137 residues long: Basic phospholipase A2 homolog Pgo-K49 (137 aa).

A signal peptide spans 1 to 16; that stretch reads MRTLLIVAVLLVGVEG. Intrachain disulfides connect Cys-42-Cys-131, Cys-44-Cys-60, Cys-59-Cys-111, Cys-65-Cys-137, Cys-66-Cys-104, Cys-73-Cys-97, and Cys-91-Cys-102. The tract at residues 121-133 is important for membrane-damaging activities in eukaryotes and bacteria; heparin-binding; it reads KKYKIHMKFFCKK.

In terms of tissue distribution, expressed by the venom gland.

It localises to the secreted. Functionally, snake venom phospholipase A2 homolog that lacks enzymatic activity. Is myotoxic. A model of myotoxic mechanism has been proposed: an apo Lys49-PLA2 is activated by the entrance of a hydrophobic molecule (e.g. fatty acid) at the hydrophobic channel of the protein leading to a reorientation of a monomer. This reorientation causes a transition between 'inactive' to 'active' states, causing alignment of C-terminal and membrane-docking sites (MDoS) side-by-side and putting the membrane-disruption sites (MDiS) in the same plane, exposed to solvent and in a symmetric position for both monomers. The MDoS region stabilizes the toxin on membrane by the interaction of charged residues with phospholipid head groups. Subsequently, the MDiS region destabilizes the membrane with penetration of hydrophobic residues. This insertion causes a disorganization of the membrane, allowing an uncontrolled influx of ions (i.e. calcium and sodium), and eventually triggering irreversible intracellular alterations and cell death. The chain is Basic phospholipase A2 homolog Pgo-K49 from Cerrophidion godmani (Porthidium godmani).